We begin with the raw amino-acid sequence, 123 residues long: PCNA-associated factor (123 aa).

A disordered region spans residues 1–123; that stretch reads MVRTKADCAG…SEEAADSGDE (123 aa). The D-box motif lies at 26–37; sequence RKTFGSSSSGSN. The PIP-box signature appears at 66–77; it reads QKGIGDFFGSPS. The KEN box signature appears at 83 to 85; that stretch reads KEN. Positions 93–105 match the Initiation motif motif; sequence EAGGSGAGKKPRK. A compositionally biased stretch (acidic residues) spans 113-123; that stretch reads PSEEAADSGDE.

Interacts with pcna.

The protein resides in the nucleus. It localises to the cytoplasm. The protein localises to the perinuclear region. Functionally, PCNA-binding protein that acts as a regulator of DNA repair during DNA replication. Following DNA damage, the interaction with pcna is disrupted, facilitating the interaction between monoubiquitinated pcna and the translesion DNA synthesis DNA polymerase eta (polh) at stalled replisomes, facilitating the bypass of replication-fork-blocking lesions. Also acts as a regulator of centrosome number. The chain is PCNA-associated factor from Xenopus laevis (African clawed frog).